A 476-amino-acid chain; its full sequence is UDP-N-acetylmuramate--L-alanine ligase (476 aa).

121–127 (GAHGKTT) is an ATP binding site.

It belongs to the MurCDEF family.

Its subcellular location is the cytoplasm. It carries out the reaction UDP-N-acetyl-alpha-D-muramate + L-alanine + ATP = UDP-N-acetyl-alpha-D-muramoyl-L-alanine + ADP + phosphate + H(+). It participates in cell wall biogenesis; peptidoglycan biosynthesis. Functionally, cell wall formation. This chain is UDP-N-acetylmuramate--L-alanine ligase, found in Clavibacter michiganensis subsp. michiganensis (strain NCPPB 382).